The primary structure comprises 601 residues: Glutamine--fructose-6-phosphate aminotransferase [isomerizing] (601 aa).

Residue cysteine 2 is the Nucleophile; for GATase activity of the active site. The Glutamine amidotransferase type-2 domain maps to 2-218 (CGIVGYIGYD…DHEIVIVKKD (217 aa)). 2 SIS domains span residues 284–423 (IIND…EHGR) and 453–591 (IATD…VDKP). The active-site For Fru-6P isomerization activity is lysine 596.

Homodimer.

The protein resides in the cytoplasm. The enzyme catalyses D-fructose 6-phosphate + L-glutamine = D-glucosamine 6-phosphate + L-glutamate. Catalyzes the first step in hexosamine metabolism, converting fructose-6P into glucosamine-6P using glutamine as a nitrogen source. The protein is Glutamine--fructose-6-phosphate aminotransferase [isomerizing] of Staphylococcus aureus (strain COL).